Here is a 378-residue protein sequence, read N- to C-terminus: Cytochrome P450 monooxygenase pytD (378 aa).

Residue Cys-321 participates in heme binding.

This sequence belongs to the cytochrome P450 family. Requires heme as cofactor.

It functions in the pathway secondary metabolite biosynthesis. In terms of biological role, cytochrome P450 monooxygenase pytD; part of the gene cluster that mediates the biosynthesis of pyranterreones, a family of antioxidative compounds. The first step of pyranonigrins biosynthesis is performed by the hybrid PKS-NRPS synthetase pytA that condenses 4 malonyl-CoA units ato the acetyl starter unit by the modular PKS of pytA. The acyl chain is then connected to an L-serine through the amide bond by the modular NRPS of pytA. A tetramic acid is formed and released from the PKS-NRPS pytA to give pyranterreone 5 with the help of the thioesterase pytI. Pyranterreone 5 could be methylated by pytC to afford pyranterreone 6. Both pyranterreones 5 and 6 are subsequently oxidized by the FAD-linked oxidoreductase pytB and the cytochrome P450 monooxygenase pytD to form the fused gamma-pyrone core, resulting in pyranterreones 7 and 11, respectively. The hydroxy group at C-8 of pyranterreones 7 and 11 are dehydrated by the aspartyl protease pytH to form a delta-7 double bond to give pyranterreones 3 and 1, 2 accordingly. The exo-methylene of pyranterreone 3 could be reduced into a pendant methyl by reductase pytE to provide pyranterreone 4, also known as cordylactam. Pyranterreone 4 can be reconverted to pyranterreone 3 through pytB-catalyzed dehydrogenation or further oxidized to pyranterreones 9 and 10. The protein is Cytochrome P450 monooxygenase pytD of Aspergillus terreus (strain NIH 2624 / FGSC A1156).